The chain runs to 442 residues: Hydroxycinnamoyltransferase 1 (442 aa).

Residues H159 and D389 each act as proton acceptor in the active site.

The protein belongs to the plant acyltransferase family. As to expression, expressed in roots, leaves, stems and seeds.

Its function is as follows. Hydroxycinnamoyl transferase that catalyzes the transfer of an acyl from p-coumaryol-CoA to various acyl acceptors. Can use feruloyl-CoA and caffeoyl-CoA as acyl donors. In Oryza sativa subsp. japonica (Rice), this protein is Hydroxycinnamoyltransferase 1.